A 197-amino-acid polypeptide reads, in one-letter code: Lymphotoxin-alpha (197 aa).

The N-terminal stretch at 1–26 (MTPPGRLYLPLLLGLLLAPPPPGAQG) is a signal peptide. Residues 55 to 197 (PAAHLVGDPS…SSVFFGAFAL (143 aa)) enclose the THD domain. Residue Asn88 is glycosylated (N-linked (GlcNAc...) asparagine). A disulfide bond links Cys112 and Cys148.

This sequence belongs to the tumor necrosis factor family. Homotrimer, and heterotrimer of either two LTB and one LTA subunits or (less prevalent) two LTA and one LTB subunits. Interacts with TNFRSF14.

Its subcellular location is the secreted. The protein localises to the membrane. Cytokine that in its homotrimeric form binds to TNFRSF1A/TNFR1, TNFRSF1B/TNFBR and TNFRSF14/HVEM. In its heterotrimeric form with LTB binds to TNFRSF3/LTBR. Lymphotoxin is produced by lymphocytes and is cytotoxic for a wide range of tumor cells in vitro and in vivo. This chain is Lymphotoxin-alpha (LTA), found in Oryctolagus cuniculus (Rabbit).